The sequence spans 33 residues: Rhinophrynin-33 (33 aa).

In terms of tissue distribution, expressed by the skin glands.

The protein localises to the secreted. Its function is as follows. Non-cytotoxic peptide with immunosuppressive and insulinotropic effects. Induces an increased production of the anti-inflammatory cytokine IL-10 and inhibits production of the pro-inflammatory cytokines TNF-alpha and IL-1beta, when incubated with mouse peritoneal cells. Does not display growth-inhibitory activity against the Gram-positive S.epidermidis and Gram-negative E.coli bacteria and against the opportunistic yeast pathogen C.parapsilosis (MIC&gt;128 uM). In addition, it lacks cytotoxic activity against mouse erythrocytes (LC(50)&gt;500 uM) and A549 human non-small cell lung adenocarcinoma cells (LC(50)&gt;100 uM). Moderately stimulates insulin release from rat clonal beta-cells and mouse pancreatic islets. Non-cytotoxic peptide with immunosuppressive but without insulinotropic effects. Inhibits production of the pro-inflammatory cytokines TNF-alpha, but has no effect on IL-10 and IL-1beta production, when incubated with mouse peritoneal cells. Has no activity of stimulation of insulin release. This chain is Rhinophrynin-33, found in Rhinophrynus dorsalis (Mexican burrowing toad).